The primary structure comprises 387 residues: 3-ketoacyl-CoA thiolase (387 aa).

Cys91 acts as the Acyl-thioester intermediate in catalysis. Residues His343 and Cys373 each act as proton acceptor in the active site.

Belongs to the thiolase-like superfamily. Thiolase family. As to quaternary structure, heterotetramer of two alpha chains (FadB) and two beta chains (FadA).

It is found in the cytoplasm. It carries out the reaction an acyl-CoA + acetyl-CoA = a 3-oxoacyl-CoA + CoA. It participates in lipid metabolism; fatty acid beta-oxidation. In terms of biological role, catalyzes the final step of fatty acid oxidation in which acetyl-CoA is released and the CoA ester of a fatty acid two carbons shorter is formed. This Shewanella oneidensis (strain ATCC 700550 / JCM 31522 / CIP 106686 / LMG 19005 / NCIMB 14063 / MR-1) protein is 3-ketoacyl-CoA thiolase.